Here is a 540-residue protein sequence, read N- to C-terminus: Hydroxylamine reductase (540 aa).

[4Fe-4S] cluster is bound by residues Cys-3, Cys-6, Cys-15, and Cys-21. Hybrid [4Fe-2O-2S] cluster-binding residues include His-236, Glu-260, Cys-304, Cys-395, Cys-423, Cys-448, Glu-483, and Lys-485. Residue Cys-395 is modified to Cysteine persulfide.

The protein belongs to the HCP family. [4Fe-4S] cluster serves as cofactor. Hybrid [4Fe-2O-2S] cluster is required as a cofactor.

It localises to the cytoplasm. It catalyses the reaction A + NH4(+) + H2O = hydroxylamine + AH2 + H(+). Its function is as follows. Catalyzes the reduction of hydroxylamine to form NH(3) and H(2)O. The polypeptide is Hydroxylamine reductase (Methanosarcina mazei (strain ATCC BAA-159 / DSM 3647 / Goe1 / Go1 / JCM 11833 / OCM 88) (Methanosarcina frisia)).